A 45-amino-acid polypeptide reads, in one-letter code: Large ribosomal subunit protein bL34 (45 aa).

The interval 1–45 (MTKRTLGGTVRKQKRTSGFRARMRSHTGQNVIRARRKKGRHRLTV) is disordered. Basic residues-rich tracts occupy residues 11–25 (RKQKRTSGFRARMRS) and 33–45 (RARRKKGRHRLTV).

This sequence belongs to the bacterial ribosomal protein bL34 family.

The protein is Large ribosomal subunit protein bL34 of Picosynechococcus sp. (strain ATCC 27264 / PCC 7002 / PR-6) (Agmenellum quadruplicatum).